A 193-amino-acid polypeptide reads, in one-letter code: Cysteine and glycine-rich protein 2 (193 aa).

Residues 10–61 (CGACGRTVYHAEEVQCDGRSFHRCCFLCMVCRKNLDSTTVAIHDEEIYCKSC) enclose the LIM zinc-binding 1 domain. The short motif at 64-69 (KKYGPK) is the Nuclear localization signal element. Residue Lys-91 forms a Glycyl lysine isopeptide (Lys-Gly) (interchain with G-Cter in SUMO2) linkage. Residues Lys-112 and Lys-131 each carry the N6-acetyllysine modification. Residues 119–170 (CSRCGDSVYAAEKIIGAGKPWHKNCFRCAKCGKSLESTTLTEKEGEIYCKGC) form the LIM zinc-binding 2 domain. An N6-acetyllysine; alternate modification is found at Lys-137. Lys-137 carries the N6-succinyllysine; alternate modification. Lys-161 is modified (N6-acetyllysine).

As to quaternary structure, interacts with KAT14. The LIM domain 1 is necessary and sufficient for this interaction. Interacts with GLRX3.

It localises to the nucleus. Functionally, drastically down-regulated in response to PDGF-BB or cell injury, that promote smooth muscle cell proliferation and dedifferentiation. Seems to play a role in the development of the embryonic vascular system. The protein is Cysteine and glycine-rich protein 2 (CSRP2) of Bos taurus (Bovine).